A 363-amino-acid chain; its full sequence is Small ribosomal subunit biogenesis GTPase RsgA (363 aa).

A CP-type G domain is found at 112-268 (HQQVIAANID…LIDTPGMREL (157 aa)). GTP-binding positions include 157-160 (TKAD) and 210-218 (GSSGAGKST). The Zn(2+) site is built by C291, C296, H298, and C304. Residues 340–363 (RVAQNNRGKGSGKRPASVDRPGRR) are disordered.

Belongs to the TRAFAC class YlqF/YawG GTPase family. RsgA subfamily. In terms of assembly, monomer. Associates with 30S ribosomal subunit, binds 16S rRNA. Requires Zn(2+) as cofactor.

Its subcellular location is the cytoplasm. In terms of biological role, one of several proteins that assist in the late maturation steps of the functional core of the 30S ribosomal subunit. Helps release RbfA from mature subunits. May play a role in the assembly of ribosomal proteins into the subunit. Circularly permuted GTPase that catalyzes slow GTP hydrolysis, GTPase activity is stimulated by the 30S ribosomal subunit. This is Small ribosomal subunit biogenesis GTPase RsgA from Xanthomonas euvesicatoria pv. vesicatoria (strain 85-10) (Xanthomonas campestris pv. vesicatoria).